Consider the following 128-residue polypeptide: Cystatin-1 (128 aa).

The N-terminal stretch at 1–17 (MIRSAVVLTVLVGVCLA) is a signal peptide. Positions 20-128 (GFVGGWSQVD…TKEVTSFECN (109 aa)) constitute a Cystatin domain. 2 disulfides stabilise this stretch: Cys84–Cys96 and Cys107–Cys127.

This sequence belongs to the cystatin family. In terms of tissue distribution, mainly expressed in gut.

It is found in the secreted. Its function is as follows. Inhibitor of cysteine proteinases. Strongly inhibits mammalian cathepsin B and H, and moderately inhibits mammalian cathepsin C. Also inhibits endogenous cathepsin B-like but not cathepsin C-like proteinases. May have a protective role against undesired digestion of a stored blood meal by endogenous peptidases. This Ornithodoros moubata (Soft tick) protein is Cystatin-1.